Consider the following 259-residue polypeptide: Phosphate import ATP-binding protein PstB (259 aa).

The ABC transporter domain maps to 5–248 (IDVSGLHVYY…NKIFTKPEKK (244 aa)). An ATP-binding site is contributed by 37 to 44 (GSSGCGKS).

This sequence belongs to the ABC transporter superfamily. Phosphate importer (TC 3.A.1.7) family. The complex is composed of two ATP-binding proteins (PstB), two transmembrane proteins (PstC and PstA) and a solute-binding protein (PstS).

It is found in the cell membrane. The catalysed reaction is phosphate(out) + ATP + H2O = ADP + 2 phosphate(in) + H(+). Its function is as follows. Part of the ABC transporter complex PstSACB involved in phosphate import. Responsible for energy coupling to the transport system. The protein is Phosphate import ATP-binding protein PstB of Thermobifida fusca (strain YX).